The primary structure comprises 382 residues: MIOREX complex component 5 (382 aa).

A mitochondrion-targeting transit peptide spans 1–12; sequence MRRTFSQLATRL.

As to quaternary structure, associates with the mitochondrial ribosome.

The protein localises to the mitochondrion. Component of MIOREX complexes, large expressome-like assemblies of ribosomes with factors involved in all the steps of post-transcriptional gene expression. The protein is MIOREX complex component 5 of Saccharomyces cerevisiae (strain ATCC 204508 / S288c) (Baker's yeast).